Here is a 262-residue protein sequence, read N- to C-terminus: Phosphonates import ATP-binding protein PhnC (262 aa).

The ABC transporter domain occupies Ile5–Asn253. Gly37–Ser44 provides a ligand contact to ATP.

The protein belongs to the ABC transporter superfamily. Phosphonates importer (TC 3.A.1.9.1) family. As to quaternary structure, the complex is composed of two ATP-binding proteins (PhnC), two transmembrane proteins (PhnE) and a solute-binding protein (PhnD).

Its subcellular location is the cell inner membrane. The catalysed reaction is phosphonate(out) + ATP + H2O = phosphonate(in) + ADP + phosphate + H(+). In terms of biological role, part of the ABC transporter complex PhnCDE involved in phosphonates, phosphate esters, phosphite and phosphate import. Responsible for energy coupling to the transport system. This chain is Phosphonates import ATP-binding protein PhnC, found in Escherichia coli (strain K12).